The sequence spans 262 residues: Putative ABC transporter ATP-binding protein SAV_3608 (262 aa).

One can recognise an ABC transporter domain in the interval 18 to 248 (LDVAGLAFAY…DTLMRAHRLE (231 aa)). 51–58 (GPNGAGKT) contributes to the ATP binding site.

This sequence belongs to the ABC transporter superfamily.

The protein localises to the cell membrane. Its function is as follows. Probably part of an ABC transporter complex. Responsible for energy coupling to the transport system. The sequence is that of Putative ABC transporter ATP-binding protein SAV_3608 from Streptomyces avermitilis (strain ATCC 31267 / DSM 46492 / JCM 5070 / NBRC 14893 / NCIMB 12804 / NRRL 8165 / MA-4680).